The primary structure comprises 222 residues: Small ribosomal subunit protein uS3 (222 aa).

A KH type-2 domain is found at 39 to 109; that stretch reads IRNFVKKKVY…NILINIVEVK (71 aa).

Belongs to the universal ribosomal protein uS3 family. As to quaternary structure, part of the 30S ribosomal subunit. Forms a tight complex with proteins S10 and S14.

Its function is as follows. Binds the lower part of the 30S subunit head. Binds mRNA in the 70S ribosome, positioning it for translation. This is Small ribosomal subunit protein uS3 from Clostridium tetani (strain Massachusetts / E88).